The following is a 765-amino-acid chain: FHF complex subunit HOOK interacting protein 2A (765 aa).

Composition is skewed to polar residues over residues 200–209 (LSTDTGQSCQ) and 538–550 (NTLS…SSSP). Disordered stretches follow at residues 200-234 (LSTD…QMGD) and 538-562 (NTLS…TDGK).

Belongs to the FHIP family.

In terms of biological role, may be required for proper functioning of the nervous system. In Bos taurus (Bovine), this protein is FHF complex subunit HOOK interacting protein 2A (FHIP2A).